The primary structure comprises 223 residues: Peptidyl-prolyl cis-trans isomerase, mitochondrial (223 aa).

The N-terminal 44 residues, 1–44 (MFGPRHFSVLKTTGSLVSSTFSSSLKPTATFSCARAFSQTSSIM), are a transit peptide targeting the mitochondrion. Residues 62–222 (NKPTSEIKAQ…KKPTIVDCGA (161 aa)) enclose the PPIase cyclophilin-type domain.

Belongs to the cyclophilin-type PPIase family.

Its subcellular location is the mitochondrion. The protein resides in the cytoplasm. The catalysed reaction is [protein]-peptidylproline (omega=180) = [protein]-peptidylproline (omega=0). Its activity is regulated as follows. Binds cyclosporin A (CsA). CsA mediates some of its effects via an inhibitory action on PPIase. PPIases accelerate the folding of proteins. It catalyzes the cis-trans isomerization of proline imidic peptide bonds in oligopeptides. The polypeptide is Peptidyl-prolyl cis-trans isomerase, mitochondrial (csr-1) (Neurospora crassa (strain ATCC 24698 / 74-OR23-1A / CBS 708.71 / DSM 1257 / FGSC 987)).